The primary structure comprises 212 residues: Protein G1-like7 (212 aa).

Positions 1-22 are enriched in low complexity; it reads MDPSGPGPSSAAAGGAPAVAAA. 2 disordered regions span residues 1–34 and 148–212; these read MDPS…RYES and KARG…PSAS. An ALOG domain is found at 31–158; that stretch reads RYESQKRRDW…ARGIPYEKKK (128 aa). A Nuclear localization signal motif is present at residues 156–160; that stretch reads KKKRK. The span at 167 to 182 shows a compositional bias: low complexity; it reads PAGVEPSGSSSAAAAA. Residues 183-194 show a composition bias toward gly residues; it reads AGGGDAGSGGGA. A compositionally biased stretch (low complexity) spans 195–212; sequence AATTTAQPGGSGTAPSAS.

The protein belongs to the plant homeotic and developmental regulators ALOG protein family.

It localises to the nucleus. Its function is as follows. Probable transcription regulator that acts as a developmental regulator by promoting cell growth in response to light. The protein is Protein G1-like7 (G1L7) of Oryza sativa subsp. japonica (Rice).